The primary structure comprises 695 residues: Follicle-stimulating hormone receptor (695 aa).

The N-terminal stretch at 1 to 17 (MALLLVALLAFLSLGSG) is a signal peptide. 2 disulfides stabilise this stretch: cysteine 18–cysteine 25 and cysteine 23–cysteine 32. Residues 18 to 46 (CHHRLCHCSNGVFLCQESKVTEIPSDLPR) enclose the LRRNT domain. The Extracellular segment spans residues 18 to 366 (CHHRLCHCSN…EDIMGDDILR (349 aa)). LRR repeat units lie at residues 49-72 (VELRFVLTKLRVIPKGAFSGFGDL), 73-97 (EKIEISQNDVLEVIEANVFSNLPKL), 98-118 (HEIRIEKANNLLYIDPDAFQN), 119-143 (LPNLRYLLISNTGIKHLPAVHKIQS), 144-169 (LQKVLLDIQDNINIHTVERNSFMGLS), 170-192 (FESMTVWLSKNGIQEIHNCAFNG), 193-216 (TQLDELNLSDNSNLEELPNDVFQG), 217-240 (ASGPVILDISRTRIRSLPSYGLEN), and 241-259 (LKKLRAKSTYRLKKLPSLE). N-linked (GlcNAc...) asparagine glycans are attached at residues asparagine 191 and asparagine 199. 4 disulfide bridges follow: cysteine 275–cysteine 346, cysteine 276–cysteine 292, cysteine 276–cysteine 356, and cysteine 292–cysteine 338. Asparagine 293 is a glycosylation site (N-linked (GlcNAc...) asparagine). At tyrosine 335 the chain carries Sulfotyrosine. Residues 367–387 (VLIWFISILAITGNILVLVIL) traverse the membrane as a helical segment. The Cytoplasmic portion of the chain corresponds to 388–398 (ITSQYKLTVPR). Residues 399 to 421 (FLMCNLAFADLCIGIYLLLIASV) form a helical membrane-spanning segment. Residues 422 to 443 (DVHTKTEYHNYAIDWQTGAGCD) lie on the Extracellular side of the membrane. Residues cysteine 442 and cysteine 517 are joined by a disulfide bond. The chain crosses the membrane as a helical span at residues 444-465 (AAGFFTVFASELSVYTLTAITL). The Cytoplasmic portion of the chain corresponds to 466-485 (ERWHTITHAMQLECKVQLRH). Residues 486–508 (AASIMLVGWIFAFAVALFPIFGI) form a helical membrane-spanning segment. At 509–528 (SSYMKVSICLPMDIDSPLSQ) the chain is on the extracellular side. A helical transmembrane segment spans residues 529-550 (LYVMSLLVLNVLAFVVICGCYT). Over 551–573 (HIYLTVRNPNITSSSSDTKIAKR) the chain is Cytoplasmic. The helical transmembrane segment at 574-597 (MAMLIFTDFLCMAPISFFAISASL) threads the bilayer. The Extracellular portion of the chain corresponds to 598-608 (KVPLITVSKSK). Residues 609-630 (ILLVLFYPINSCANPFLYAIFT) form a helical membrane-spanning segment. Over 631 to 695 (KNFRRDFFIL…LIPLRHLAKN (65 aa)) the chain is Cytoplasmic.

This sequence belongs to the G-protein coupled receptor 1 family. FSH/LSH/TSH subfamily. As to quaternary structure, homotrimer. Functions as a homotrimer binding the FSH hormone heterodimer composed of CGA and FSHB. Interacts with ARRB2. Interacts with APPL2; interaction is independent of follicle stimulating hormone stimulation. In terms of processing, N-glycosylated; indirectly required for FSH-binding, possibly via a conformational change that allows high affinity binding of hormone. Sulfated.

It is found in the cell membrane. In terms of biological role, g protein-coupled receptor for follitropin, the follicle-stimulating hormone. Through cAMP production activates the downstream PI3K-AKT and ERK1/ERK2 signaling pathways. In Bos taurus (Bovine), this protein is Follicle-stimulating hormone receptor (FSHR).